Here is a 347-residue protein sequence, read N- to C-terminus: F-box/kelch-repeat protein At5g03020 (347 aa).

Residues 1-21 (MTEEMSKESPPPPPTSFSSLP) form a disordered region. One can recognise an F-box domain in the interval 14 to 62 (PTSFSSLPDDVALDCRARISRFHYPTLSLVSKGFRTLIASPELEATRSF). Kelch repeat units lie at residues 119-165 (QIYI…VIDG) and 167-215 (IYVI…KKKH).

The chain is F-box/kelch-repeat protein At5g03020 from Arabidopsis thaliana (Mouse-ear cress).